The following is a 389-amino-acid chain: 1-deoxy-D-xylulose 5-phosphate reductoisomerase (389 aa).

6 residues coordinate NADPH: Thr-10, Gly-11, Ser-12, Ile-13, Asn-38, and Asn-122. 1-deoxy-D-xylulose 5-phosphate is bound at residue Lys-123. Glu-124 provides a ligand contact to NADPH. Asp-148 provides a ligand contact to Mn(2+). Ser-149, Glu-150, Ser-173, and His-196 together coordinate 1-deoxy-D-xylulose 5-phosphate. Mn(2+) is bound at residue Glu-150. Gly-202 serves as a coordination point for NADPH. Residues Ser-209, Asn-214, Lys-215, and Glu-218 each contribute to the 1-deoxy-D-xylulose 5-phosphate site. Mn(2+) is bound at residue Glu-218.

The protein belongs to the DXR family. Mg(2+) serves as cofactor. Mn(2+) is required as a cofactor.

The catalysed reaction is 2-C-methyl-D-erythritol 4-phosphate + NADP(+) = 1-deoxy-D-xylulose 5-phosphate + NADPH + H(+). Its pathway is isoprenoid biosynthesis; isopentenyl diphosphate biosynthesis via DXP pathway; isopentenyl diphosphate from 1-deoxy-D-xylulose 5-phosphate: step 1/6. In terms of biological role, catalyzes the NADPH-dependent rearrangement and reduction of 1-deoxy-D-xylulose-5-phosphate (DXP) to 2-C-methyl-D-erythritol 4-phosphate (MEP). The sequence is that of 1-deoxy-D-xylulose 5-phosphate reductoisomerase from Wolbachia sp. subsp. Brugia malayi (strain TRS).